The chain runs to 353 residues: Fe(3+) ions import ATP-binding protein FbpC (353 aa).

The 231-residue stretch at 9-239 folds into the ABC transporter domain; sequence VTFQNVRKSF…PASSFIADFM (231 aa). 41 to 48 contacts ATP; sequence GPSGCGKT.

Belongs to the ABC transporter superfamily. Fe(3+) ion importer (TC 3.A.1.10) family. As to quaternary structure, the complex is composed of two ATP-binding proteins (FbpC), two transmembrane proteins (FbpB) and a solute-binding protein (FbpA).

It is found in the cell inner membrane. The enzyme catalyses Fe(3+)(out) + ATP + H2O = Fe(3+)(in) + ADP + phosphate + H(+). Functionally, part of the ABC transporter complex FbpABC involved in Fe(3+) ions import. Responsible for energy coupling to the transport system. The protein is Fe(3+) ions import ATP-binding protein FbpC of Rhizobium etli (strain ATCC 51251 / DSM 11541 / JCM 21823 / NBRC 15573 / CFN 42).